The sequence spans 100 residues: Large ribosomal subunit protein bL27 (100 aa).

The propeptide occupies 1–9 (MLKMNLQLF).

Belongs to the bacterial ribosomal protein bL27 family. The N-terminus is cleaved by ribosomal processing cysteine protease Prp.

The sequence is that of Large ribosomal subunit protein bL27 from Clostridium perfringens (strain ATCC 13124 / DSM 756 / JCM 1290 / NCIMB 6125 / NCTC 8237 / Type A).